The following is a 364-amino-acid chain: DNA polymerase processivity factor (364 aa).

Disordered regions lie at residues 1-24 (MDRS…KEPP), 284-306 (DDPK…KVEE), and 325-364 (VPTK…RCGM).

It belongs to the herpesviridae polymerase accessory protein family.

Functionally, accessory subunit of the DNA polymerase that acts to increase the processivity of polymerization. This chain is DNA polymerase processivity factor (U27), found in Homo sapiens (Human).